The chain runs to 118 residues: Phage-like element PBSX protein XkdH (118 aa).

This sequence to B.subtilis YqbH.

The protein is Phage-like element PBSX protein XkdH (xkdH) of Bacillus subtilis (strain 168).